A 251-amino-acid chain; its full sequence is 4-hydroxy-tetrahydrodipicolinate reductase (251 aa).

Residues 9–14 (GCNGKM), 85–87 (ATT), and 109–112 (SANM) each bind NAD(+). The active-site Proton donor/acceptor is the histidine 141. Histidine 142 lines the (S)-2,3,4,5-tetrahydrodipicolinate pocket. Lysine 145 acts as the Proton donor in catalysis. 151–152 (GT) is a binding site for (S)-2,3,4,5-tetrahydrodipicolinate.

It belongs to the DapB family.

The protein localises to the cytoplasm. It carries out the reaction (S)-2,3,4,5-tetrahydrodipicolinate + NAD(+) + H2O = (2S,4S)-4-hydroxy-2,3,4,5-tetrahydrodipicolinate + NADH + H(+). It catalyses the reaction (S)-2,3,4,5-tetrahydrodipicolinate + NADP(+) + H2O = (2S,4S)-4-hydroxy-2,3,4,5-tetrahydrodipicolinate + NADPH + H(+). Its pathway is amino-acid biosynthesis; L-lysine biosynthesis via DAP pathway; (S)-tetrahydrodipicolinate from L-aspartate: step 4/4. Functionally, catalyzes the conversion of 4-hydroxy-tetrahydrodipicolinate (HTPA) to tetrahydrodipicolinate. This chain is 4-hydroxy-tetrahydrodipicolinate reductase, found in Caldanaerobacter subterraneus subsp. tengcongensis (strain DSM 15242 / JCM 11007 / NBRC 100824 / MB4) (Thermoanaerobacter tengcongensis).